The chain runs to 61 residues: Alpha-conotoxin PnIB (61 aa).

A signal peptide spans 1-21; it reads MGMRMMFTVFLLVVLATTVVS. Positions 22–44 are excised as a propeptide; the sequence is FTSDRASDDGNAAASDLIALTIK. Disulfide bonds link Cys46-Cys52 and Cys47-Cys60. Residues 48 to 50 are ser-Xaa-Pro motif, crucial for potent interaction with nAChR; sequence SLP. Tyr59 is modified (sulfotyrosine). At Cys60 the chain carries Cysteine amide.

Belongs to the conotoxin A superfamily. In terms of tissue distribution, expressed by the venom duct.

Its subcellular location is the secreted. Functionally, alpha-conotoxins act on postsynaptic membranes, they bind to the nicotinic acetylcholine receptors (nAChR) and thus inhibit them. This toxin blocks mammalian nAChRs (alpha-7/CHRNA7 &gt; alpha-3-beta-2/CHRNA3-CHRNB2). The chain is Alpha-conotoxin PnIB from Conus pennaceus (Feathered cone).